A 507-amino-acid polypeptide reads, in one-letter code: MPSSLFADMERNGSGGGGGETLDDQRALQIALDQLSLLGLDNDESAMYDNEPRKKSINMTECVQVPSSEHVAEIVGRQGCKIKALRAKTNTYIKTPVRGEEPVFVVTGRKEDVALARREIISAAEHFSMIRASRNKNAAALNGGSVPAPPNLPGQTTIQVRVPYRVVGLVVGPKGATIKRIQQQTHTYIVTPSRDKEPVFEVTGMPENVDRAREEIEAHIAVRTGGLIEVADENDFHANGTDVGFDLHGSLWSKSNQSSGSRKALSNYRNDSSSSLGSASTDSYFGGTRMADYSPPSPDLSYTNNNNNNNGNGYVYSTGISPDCTDLTFESGFDPAPAPPPSAYTWSQLERSTGSAPYHNNANGILLNQRRLNGVGCTTAPRLSPPLHTCNGLSEHPLARRVRSDPGGGLSYSAYSNMACDSSSSSSSSSSSSSSSSSSSSSSSSSGMRRKGSRECSICFESEVIAALVPCGHNLFCMECANRICEKNQPQCPVCHAGVTQAIRIFS.

The tract at residues 1–22 (MPSSLFADMERNGSGGGGGETL) is disordered. KH domains lie at 59-120 (MTEC…RREI) and 155-216 (QTTI…REEI). 2 disordered regions span residues 256–279 (NQSSGSRKALSNYRNDSSSSLGSA) and 426–450 (SSSSSSSSSSSSSSSSSSSSSGMRR). Residues 426–446 (SSSSSSSSSSSSSSSSSSSSS) are compositionally biased toward low complexity. The RING-type zinc-finger motif lies at 456–496 (CSICFESEVIAALVPCGHNLFCMECANRICEKNQPQCPVCH).

It is found in the cytoplasm. Its subcellular location is the nucleus. The protein resides in the cytoplasmic granule. The protein localises to the P-body. Functionally, RNA-binding protein. May be involved in post-transcriptional regulatory mechanisms. The chain is RNA-binding protein MEX3B (mex3b) from Xenopus laevis (African clawed frog).